Reading from the N-terminus, the 108-residue chain is Iron-sulfur cluster assembly protein CyaY (108 aa).

This sequence belongs to the frataxin family.

In terms of biological role, involved in iron-sulfur (Fe-S) cluster assembly. May act as a regulator of Fe-S biogenesis. The polypeptide is Iron-sulfur cluster assembly protein CyaY (Burkholderia ambifaria (strain MC40-6)).